The following is a 611-amino-acid chain: Cilia- and flagella-associated protein 100 (611 aa).

Polar residues predominate over residues 1-17; that stretch reads MSEIPSTIVSKNMTNDK. The tract at residues 1 to 57 is disordered; sequence MSEIPSTIVSKNMTNDKNSLESMNISSSSSTEENPKKQARKNEEHGPDPSANPFHLS. The span at 20–32 shows a compositional bias: low complexity; that stretch reads LESMNISSSSSTE. Residues 33–47 show a composition bias toward basic and acidic residues; that stretch reads ENPKKQARKNEEHGP. Coiled-coil stretches lie at residues 101-128, 164-203, and 230-257; these read SLRR…RAFR, ALDV…FDEF, and LEIR…KHYK. Disordered stretches follow at residues 287–323 and 338–380; these read EVSE…GQGT and SPSY…GEEP. Positions 338–357 are enriched in low complexity; that stretch reads SPSYLSSPQQGSQPSESSGG. 2 coiled-coil regions span residues 393 to 432 and 526 to 578; these read VFRE…MDRE and QVKI…RGRT.

This sequence belongs to the CFAP100 family.

It localises to the cytoplasm. The protein localises to the cytoskeleton. The protein resides in the cilium axoneme. May play a role in ciliary/flagellar motility by regulating the assembly and the activity of axonemal inner dynein arm. The protein is Cilia- and flagella-associated protein 100 of Homo sapiens (Human).